Reading from the N-terminus, the 288-residue chain is MSAVIIDGKAVARRVRENVAREVAEFRDRTGIQPGLATVLVGDDPASAVYVGGKRRACVEAGMADLHQHLPADTSQEKVAALLDDLAADPAVSGILLQLPVPEGLDGAALVGRIPPGKDVDGLTTASVGLLARGLPGLRPCTPSGIIELLDSYDVELSGTPTVVVGRSELVGRPVAALLVGRNATLTICHSRTRDLAAVCRGADVLVVAAGKQAIIGADAVKPGATVIDVGMHRTPQGLRGDVDFEAVREVAGKLTPVPGGVGPMTIAMLLRNTLLAAQAATGTDGPG.

Residues 166 to 168 (GRS) and serine 191 contribute to the NADP(+) site.

Belongs to the tetrahydrofolate dehydrogenase/cyclohydrolase family. In terms of assembly, homodimer.

It catalyses the reaction (6R)-5,10-methylene-5,6,7,8-tetrahydrofolate + NADP(+) = (6R)-5,10-methenyltetrahydrofolate + NADPH. The enzyme catalyses (6R)-5,10-methenyltetrahydrofolate + H2O = (6R)-10-formyltetrahydrofolate + H(+). It functions in the pathway one-carbon metabolism; tetrahydrofolate interconversion. Catalyzes the oxidation of 5,10-methylenetetrahydrofolate to 5,10-methenyltetrahydrofolate and then the hydrolysis of 5,10-methenyltetrahydrofolate to 10-formyltetrahydrofolate. The protein is Bifunctional protein FolD 2 of Frankia casuarinae (strain DSM 45818 / CECT 9043 / HFP020203 / CcI3).